A 401-amino-acid chain; its full sequence is Imidazolonepropionase (401 aa).

Fe(3+)-binding residues include His66 and His68. Zn(2+) is bound by residues His66 and His68. Residues Arg75, Tyr138, and His171 each contribute to the 4-imidazolone-5-propanoate site. An N-formimidoyl-L-glutamate-binding site is contributed by Tyr138. His236 lines the Fe(3+) pocket. His236 is a binding site for Zn(2+). Gln239 contacts 4-imidazolone-5-propanoate. Fe(3+) is bound at residue Asp311. Position 311 (Asp311) interacts with Zn(2+). 2 residues coordinate N-formimidoyl-L-glutamate: Asn313 and Gly315. Thr316 is a binding site for 4-imidazolone-5-propanoate.

The protein belongs to the metallo-dependent hydrolases superfamily. HutI family. The cofactor is Zn(2+). Fe(3+) is required as a cofactor.

Its subcellular location is the cytoplasm. It catalyses the reaction 4-imidazolone-5-propanoate + H2O = N-formimidoyl-L-glutamate. It functions in the pathway amino-acid degradation; L-histidine degradation into L-glutamate; N-formimidoyl-L-glutamate from L-histidine: step 3/3. In terms of biological role, catalyzes the hydrolytic cleavage of the carbon-nitrogen bond in imidazolone-5-propanoate to yield N-formimidoyl-L-glutamate. It is the third step in the universal histidine degradation pathway. The sequence is that of Imidazolonepropionase from Pseudomonas putida (Arthrobacter siderocapsulatus).